Reading from the N-terminus, the 208-residue chain is N-(5'-phosphoribosyl)anthranilate isomerase (208 aa).

The protein belongs to the TrpF family.

It catalyses the reaction N-(5-phospho-beta-D-ribosyl)anthranilate = 1-(2-carboxyphenylamino)-1-deoxy-D-ribulose 5-phosphate. It participates in amino-acid biosynthesis; L-tryptophan biosynthesis; L-tryptophan from chorismate: step 3/5. In Deinococcus radiodurans (strain ATCC 13939 / DSM 20539 / JCM 16871 / CCUG 27074 / LMG 4051 / NBRC 15346 / NCIMB 9279 / VKM B-1422 / R1), this protein is N-(5'-phosphoribosyl)anthranilate isomerase.